The chain runs to 460 residues: Origin recognition complex subunit 5 (460 aa).

41-48 (GHSGTGKT) is an ATP binding site.

The protein belongs to the ORC5 family. As to quaternary structure, ORC is composed of six subunits.

It is found in the nucleus. In terms of biological role, component of the origin recognition complex (ORC) that binds origins of replication. DNA-binding is ATP-dependent, however specific DNA sequences that define origins of replication have not been identified so far. ORC is required to assemble the pre-replication complex necessary to initiate DNA replication. This chain is Origin recognition complex subunit 5 (Orc5), found in Drosophila melanogaster (Fruit fly).